The sequence spans 146 residues: Hemoglobin subunit beta (146 aa).

V1 is modified (N-acetylvaline). A Globin domain is found at 2–146 (HLTADEKVSL…VANALAHKYH (145 aa)). Residue S44 is modified to Phosphoserine. Position 59 is an N6-acetyllysine (K59). Heme b is bound at residue H63. The residue at position 82 (K82) is an N6-acetyllysine. H92 provides a ligand contact to heme b. C93 is modified (S-nitrosocysteine). K144 carries the post-translational modification N6-acetyllysine.

The protein belongs to the globin family. Heterotetramer of two alpha chains and two beta chains. Red blood cells.

Functionally, involved in oxygen transport from the lung to the various peripheral tissues. The polypeptide is Hemoglobin subunit beta (Tamias striatus (Eastern chipmunk)).